A 1217-amino-acid polypeptide reads, in one-letter code: DNA-directed RNA polymerase subunit beta' (1217 aa).

Residues Cys60, Cys62, Cys75, and Cys78 each contribute to the Zn(2+) site. The Mg(2+) site is built by Asp449, Asp451, and Asp453. Cys818, Cys892, Cys899, and Cys902 together coordinate Zn(2+).

It belongs to the RNA polymerase beta' chain family. The RNAP catalytic core consists of 2 alpha, 1 beta, 1 beta' and 1 omega subunit. When a sigma factor is associated with the core the holoenzyme is formed, which can initiate transcription. Requires Mg(2+) as cofactor. Zn(2+) is required as a cofactor.

The enzyme catalyses RNA(n) + a ribonucleoside 5'-triphosphate = RNA(n+1) + diphosphate. In terms of biological role, DNA-dependent RNA polymerase catalyzes the transcription of DNA into RNA using the four ribonucleoside triphosphates as substrates. The chain is DNA-directed RNA polymerase subunit beta' from Enterococcus faecalis (strain ATCC 700802 / V583).